Here is a 108-residue protein sequence, read N- to C-terminus: FK506-binding protein 1 (108 aa).

Residues glycine 20–asparagine 108 form the PPIase FKBP-type domain.

This sequence belongs to the FKBP-type PPIase family. FKBP1 subfamily.

It is found in the cytoplasm. It carries out the reaction [protein]-peptidylproline (omega=180) = [protein]-peptidylproline (omega=0). Inhibited by both FK506 and rapamycin. Its function is as follows. PPIases accelerate the folding of proteins. It catalyzes the cis-trans isomerization of proline imidic peptide bonds in oligopeptides. The polypeptide is FK506-binding protein 1 (FPR1) (Yarrowia lipolytica (strain CLIB 122 / E 150) (Yeast)).